The following is an 89-amino-acid chain: Large ribosomal subunit protein bL27 (89 aa).

The interval 1-26 is disordered; sequence MAQKKAGGSSRNGRDSVGQRRGVKRF.

It belongs to the bacterial ribosomal protein bL27 family.

This Desulfovibrio desulfuricans (strain ATCC 27774 / DSM 6949 / MB) protein is Large ribosomal subunit protein bL27.